The following is a 942-amino-acid chain: UvrABC system protein A (942 aa).

31-38 (GLSGSGKS) contacts ATP. A C4-type zinc finger spans residues 253–280 (CSECGYSLPELEPRLFSFNNPAGACPTC). ABC transporter domains are found at residues 310 to 586 (WDRR…EASI) and 606 to 936 (YDAN…RFLT). Position 639–646 (639–646 (GVSGSGKS)) interacts with ATP. A C4-type zinc finger spans residues 739 to 765 (CEACQGDGVIKVEMHFLPDVYVPCDHC).

This sequence belongs to the ABC transporter superfamily. UvrA family. As to quaternary structure, forms a heterotetramer with UvrB during the search for lesions.

The protein localises to the cytoplasm. Functionally, the UvrABC repair system catalyzes the recognition and processing of DNA lesions. UvrA is an ATPase and a DNA-binding protein. A damage recognition complex composed of 2 UvrA and 2 UvrB subunits scans DNA for abnormalities. When the presence of a lesion has been verified by UvrB, the UvrA molecules dissociate. The sequence is that of UvrABC system protein A from Haemophilus ducreyi (strain 35000HP / ATCC 700724).